The primary structure comprises 369 residues: Tyrosinase-like protein orsC (369 aa).

Residues 1-23 (MLAFNPLVTALAALIFLFCQANA) form the signal peptide. Positions 112 and 121 each coordinate Cu cation. N165, N179, N253, and N272 each carry an N-linked (GlcNAc...) asparagine glycan. Residue H315 coordinates Cu cation.

It functions in the pathway secondary metabolite biosynthesis. Its function is as follows. Tyrosinase-like protein; part of the gene cluster that mediates the biosynthesis of orsellinic acid, as well as of the cathepsin K inhibitors F9775 A and F9775 B. The non-reducing polyketide synthase orsA produces orsellinic acid by condensing acetyl-CoA with 3 malonyl-CoA units. Further modifications by the decarboxylase orsB and the tyrosinase-like protein orsC lead to the production of F9775 A and F9775 B. The functions of orsD and orsE remain unclear since only orsB and orsC are required to convert orsellinic acid into F9775 A and F9775 B. In Emericella nidulans (strain FGSC A4 / ATCC 38163 / CBS 112.46 / NRRL 194 / M139) (Aspergillus nidulans), this protein is Tyrosinase-like protein orsC.